We begin with the raw amino-acid sequence, 294 residues long: Ribosomal protein L11 methyltransferase (294 aa).

Positions 145, 166, 188, and 230 each coordinate S-adenosyl-L-methionine.

This sequence belongs to the methyltransferase superfamily. PrmA family.

It localises to the cytoplasm. The catalysed reaction is L-lysyl-[protein] + 3 S-adenosyl-L-methionine = N(6),N(6),N(6)-trimethyl-L-lysyl-[protein] + 3 S-adenosyl-L-homocysteine + 3 H(+). Its function is as follows. Methylates ribosomal protein L11. This chain is Ribosomal protein L11 methyltransferase, found in Glaesserella parasuis serovar 5 (strain SH0165) (Haemophilus parasuis).